A 274-amino-acid polypeptide reads, in one-letter code: Thiazole synthase (274 aa).

The active-site Schiff-base intermediate with DXP is lysine 115. Residues glycine 176, 202–203 (AG), and 224–225 (NS) each bind 1-deoxy-D-xylulose 5-phosphate.

This sequence belongs to the ThiG family. As to quaternary structure, homotetramer. Forms heterodimers with either ThiH or ThiS.

It is found in the cytoplasm. It catalyses the reaction [ThiS sulfur-carrier protein]-C-terminal-Gly-aminoethanethioate + 2-iminoacetate + 1-deoxy-D-xylulose 5-phosphate = [ThiS sulfur-carrier protein]-C-terminal Gly-Gly + 2-[(2R,5Z)-2-carboxy-4-methylthiazol-5(2H)-ylidene]ethyl phosphate + 2 H2O + H(+). Its pathway is cofactor biosynthesis; thiamine diphosphate biosynthesis. In terms of biological role, catalyzes the rearrangement of 1-deoxy-D-xylulose 5-phosphate (DXP) to produce the thiazole phosphate moiety of thiamine. Sulfur is provided by the thiocarboxylate moiety of the carrier protein ThiS. In vitro, sulfur can be provided by H(2)S. The sequence is that of Thiazole synthase from Psychrobacter cryohalolentis (strain ATCC BAA-1226 / DSM 17306 / VKM B-2378 / K5).